We begin with the raw amino-acid sequence, 1273 residues long: Ras-specific guanine nucleotide-releasing factor 1 (1273 aa).

Residues 22-129 (DGTRKGYLSK…WVAAIAHASY (108 aa)) enclose the PH 1 domain. The IQ domain maps to 204 to 229 (KKIKKVQSFLRGWLCRRKWKTIIQDY). The DH domain maps to 240 to 426 (KRNQVVFSML…EELSRIMHDE (187 aa)). The PH 2 domain maps to 467-584 (PMSEKGKITR…WTSDISQCVD (118 aa)). Residues Ser577 and Ser626 each carry the phosphoserine; by PLK2 modification. The region spanning 644-761 (KVLQIRYASV…SRRRKLSLNI (118 aa)) is the N-terminal Ras-GEF domain. The segment at 724 to 754 (YGEPPKSPRATRKFSSPPPLSITKTSSPSRR) is disordered. Ser758 carries the post-translational modification Phosphoserine. Ser779 and Ser800 each carry phosphoserine; by PLK2. The interval 809–874 (TNKIPDEGDT…PKSVKNKNSS (66 aa)) is disordered. Residues 842–854 (SDIDQNQSDDGDT) are compositionally biased toward acidic residues. The segment covering 855–867 (ETSPTKSPTTPKS) has biased composition (low complexity). One can recognise a Ras-GEF domain in the interval 1038–1270 (SALEIAEQLT…YESSLRIEPK (233 aa)).

Homooligomer and heterooligomer with RASGRF2. Interacts with USP8, thereby regulating its stability. Phosphorylated by PLK2, leading to ubiquitination and degradation by the proteasome. In terms of processing, ubiquitinated and degraded following phosphorylation by PLK2. Post-translationally, phosphorylated by SRC and LCK. Phosphorylation by LCK increases its capacity to stimulate the GDP/GTP exchange on Ras, whereas its phosphorylation by SRC seems not to have an effect on stimulation activity.

Its function is as follows. Promotes the exchange of Ras-bound GDP by GTP. In Homo sapiens (Human), this protein is Ras-specific guanine nucleotide-releasing factor 1 (RASGRF1).